Consider the following 568-residue polypeptide: Malate synthase, glyoxysomal (568 aa).

The interval 1-20 (MGSLGMYSESGLTKKGSSRG) is disordered. Catalysis depends on Arg-183, which acts as the Proton acceptor. The active-site Proton donor is the Asp-469. The Microbody targeting signal motif lies at 566–568 (SKL).

Belongs to the malate synthase family.

It is found in the glyoxysome. It catalyses the reaction glyoxylate + acetyl-CoA + H2O = (S)-malate + CoA + H(+). Its pathway is carbohydrate metabolism; glyoxylate cycle; (S)-malate from isocitrate: step 2/2. The polypeptide is Malate synthase, glyoxysomal (Cucumis sativus (Cucumber)).